The sequence spans 424 residues: Acetyl-CoA acetyltransferase, mitochondrial (424 aa).

The transit peptide at Met1 to Tyr30 directs the protein to the mitochondrion. The residue at position 63 (Lys63) is an N6-acetyllysine; alternate. Residue Lys63 is modified to N6-succinyllysine; alternate. Position 75 is an N6-succinyllysine (Lys75). Cys123 functions as the Acyl-thioester intermediate in the catalytic mechanism. Residues Lys171, Lys178, Lys187, and Lys199 each carry the N6-acetyllysine; alternate modification. N6-succinyllysine; alternate occurs at positions 171, 178, 187, and 199. Ser204 bears the Phosphoserine mark. Tyr216 serves as a coordination point for CoA. Tyr216 provides a ligand contact to K(+). 2 positions are modified to N6-acetyllysine; alternate: Lys220 and Lys227. Residues Lys220 and Lys227 each carry the N6-succinyllysine; alternate modification. Lys240 carries the post-translational modification N6-succinyllysine. The residue at position 242 (Lys242) is an N6-acetyllysine; alternate. Residue Lys242 is modified to N6-succinyllysine; alternate. N6-acetyllysine occurs at positions 248 and 254. CoA is bound by residues Arg255–Asp257 and Lys260. An N6-acetyllysine; alternate modification is found at Lys260. Residue Lys260 is modified to N6-succinyllysine; alternate. N6-succinyllysine occurs at positions 263 and 265. Lys270 is modified (N6-acetyllysine). 3 residues coordinate K(+): Ala277, Ala278, and Ala280. Position 281 (Ser281) interacts with CoA. An N6-acetyllysine modification is found at Lys335. Residue Val378 participates in K(+) binding. The active-site Proton donor/acceptor is the Cys410.

Belongs to the thiolase-like superfamily. Thiolase family. As to quaternary structure, homotetramer. In terms of processing, succinylation at Lys-265, adjacent to a coenzyme A binding site. Desuccinylated by SIRT5.

It is found in the mitochondrion. The catalysed reaction is 2 acetyl-CoA = acetoacetyl-CoA + CoA. It carries out the reaction propanoyl-CoA + acetyl-CoA = 2-methyl-3-oxobutanoyl-CoA + CoA. Its pathway is lipid metabolism; fatty acid beta-oxidation. Activated by potassium ions, but not sodium ions. In terms of biological role, this is one of the enzymes that catalyzes the last step of the mitochondrial beta-oxidation pathway, an aerobic process breaking down fatty acids into acetyl-CoA. Using free coenzyme A/CoA, catalyzes the thiolytic cleavage of medium- to long-chain 3-oxoacyl-CoAs into acetyl-CoA and a fatty acyl-CoA shortened by two carbon atoms. The activity of the enzyme is reversible and it can also catalyze the condensation of two acetyl-CoA molecules into acetoacetyl-CoA. Thereby, it plays a major role in ketone body metabolism. The sequence is that of Acetyl-CoA acetyltransferase, mitochondrial (Acat1) from Mus musculus (Mouse).